The sequence spans 152 residues: 6,7-dimethyl-8-ribityllumazine synthase (152 aa).

5-amino-6-(D-ribitylamino)uracil contacts are provided by residues Phe-22, 54-56, and 78-80; these read AFE and AVI. (2S)-2-hydroxy-3-oxobutyl phosphate is bound at residue 83–84; it reads ET. His-86 functions as the Proton donor in the catalytic mechanism. Residue Phe-111 coordinates 5-amino-6-(D-ribitylamino)uracil. Arg-125 is a (2S)-2-hydroxy-3-oxobutyl phosphate binding site.

It belongs to the DMRL synthase family.

The enzyme catalyses (2S)-2-hydroxy-3-oxobutyl phosphate + 5-amino-6-(D-ribitylamino)uracil = 6,7-dimethyl-8-(1-D-ribityl)lumazine + phosphate + 2 H2O + H(+). It participates in cofactor biosynthesis; riboflavin biosynthesis; riboflavin from 2-hydroxy-3-oxobutyl phosphate and 5-amino-6-(D-ribitylamino)uracil: step 1/2. Catalyzes the formation of 6,7-dimethyl-8-ribityllumazine by condensation of 5-amino-6-(D-ribitylamino)uracil with 3,4-dihydroxy-2-butanone 4-phosphate. This is the penultimate step in the biosynthesis of riboflavin. In Limosilactobacillus reuteri (strain DSM 20016) (Lactobacillus reuteri), this protein is 6,7-dimethyl-8-ribityllumazine synthase.